Consider the following 698-residue polypeptide: Elongation factor G (698 aa).

The 276-residue stretch at 10–285 (DKTRNIGIMA…GVVDYLPSPL (276 aa)) folds into the tr-type G domain. GTP is bound by residues 19–26 (AHIDAGKT), 83–87 (DTPGH), and 137–140 (NKMD).

It belongs to the TRAFAC class translation factor GTPase superfamily. Classic translation factor GTPase family. EF-G/EF-2 subfamily.

The protein resides in the cytoplasm. Functionally, catalyzes the GTP-dependent ribosomal translocation step during translation elongation. During this step, the ribosome changes from the pre-translocational (PRE) to the post-translocational (POST) state as the newly formed A-site-bound peptidyl-tRNA and P-site-bound deacylated tRNA move to the P and E sites, respectively. Catalyzes the coordinated movement of the two tRNA molecules, the mRNA and conformational changes in the ribosome. In Lactobacillus johnsonii (strain CNCM I-12250 / La1 / NCC 533), this protein is Elongation factor G.